A 760-amino-acid chain; its full sequence is NAD(P)H-quinone oxidoreductase subunit 5, chloroplastic (760 aa).

16 helical membrane-spanning segments follow: residues 9 to 29 (WIISFVTLPVPMLIGMGLLLF), 39 to 59 (IWAFPSVLLLSIVMVFSIDLF), 89 to 109 (IDPLTSILLILITTVGILVLV), 125 to 145 (FVYMSFFNTSMLGLVTSSNLI), 147 to 167 (IYIFWELVGMCSYLLIGFWFT), 185 to 205 (GDFGLLLGILGLYWITGSFEF), 221 to 241 (NEVHFLFVTLCAFLLFSGAIA), 260 to 280 (TPISALIHAATMVAAGIFLVA), 282 to 302 (LLPLFVVIPYIMKLIALIGII), 329 to 349 (LGYTMLALGMGSYRAALFHLI), 356 to 376 (ALLFLGSGSIIHSMEVIVGYS), 398 to 418 (IAFLLGTLSLCGIPPLACFWS), 429 to 449 (YSPIFAIIAFSTAGLTAFYMF), 556 to 576 (ILFPMLVLVLFTLFIGAIGIP), 620 to 640 (FSVSIASFGIFIASSLYKPIY), and 734 to 754 (FYLLLYLFYVLIFLLISSSIF).

It belongs to the complex I subunit 5 family. In terms of assembly, NDH is composed of at least 16 different subunits, 5 of which are encoded in the nucleus.

Its subcellular location is the plastid. It localises to the chloroplast thylakoid membrane. It carries out the reaction a plastoquinone + NADH + (n+1) H(+)(in) = a plastoquinol + NAD(+) + n H(+)(out). It catalyses the reaction a plastoquinone + NADPH + (n+1) H(+)(in) = a plastoquinol + NADP(+) + n H(+)(out). NDH shuttles electrons from NAD(P)H:plastoquinone, via FMN and iron-sulfur (Fe-S) centers, to quinones in the photosynthetic chain and possibly in a chloroplast respiratory chain. The immediate electron acceptor for the enzyme in this species is believed to be plastoquinone. Couples the redox reaction to proton translocation, and thus conserves the redox energy in a proton gradient. The polypeptide is NAD(P)H-quinone oxidoreductase subunit 5, chloroplastic (ndhF) (Populus trichocarpa (Western balsam poplar)).